The chain runs to 374 residues: S-adenosylmethionine:tRNA ribosyltransferase-isomerase (374 aa).

The protein belongs to the QueA family. Monomer.

The protein resides in the cytoplasm. The catalysed reaction is 7-aminomethyl-7-carbaguanosine(34) in tRNA + S-adenosyl-L-methionine = epoxyqueuosine(34) in tRNA + adenine + L-methionine + 2 H(+). The protein operates within tRNA modification; tRNA-queuosine biosynthesis. Functionally, transfers and isomerizes the ribose moiety from AdoMet to the 7-aminomethyl group of 7-deazaguanine (preQ1-tRNA) to give epoxyqueuosine (oQ-tRNA). The protein is S-adenosylmethionine:tRNA ribosyltransferase-isomerase of Sorangium cellulosum (strain So ce56) (Polyangium cellulosum (strain So ce56)).